The chain runs to 328 residues: MIFSILEHILTHISFSVISIVLTIYFLTLLVNLDEIIGFFDSSDKGIVITFFGITGLLFTRWIYSGHFPLSNLYESLIFLSWAFSIIHMVSYFNKKKKNHLNAITAPSAIFIQGFATSGLLNKMPQSAILVPALQSQWLMMHVSMMILGYGALLCGSLLSMALLVITFRKVGPTFLQKNIKKKFLLTELFSFDVFYSINEKNAILLQQNINFSFSRNYYRYQLIEQLDYWSFRIISLGFIFLTVGILSGAVWANETWGSYWNWDPKETWAFITWTIFAIYLHIKTNRNVRSINSAIVASIGFILIWICYFGVNLLGIGLHSYGSFTSN.

8 consecutive transmembrane segments (helical) span residues 13–33 (ISFS…LVNL), 46–66 (GIVI…IYSG), 73–93 (LYES…VSYF), 101–121 (LNAI…SGLL), 146–166 (MILG…LLVI), 234–254 (IISL…VWAN), 263–283 (WDPK…YLHI), and 295–315 (AIVA…VNLL).

It belongs to the CcmF/CycK/Ccl1/NrfE/CcsA family. As to quaternary structure, may interact with Ccs1.

Its subcellular location is the plastid. It localises to the chloroplast thylakoid membrane. In terms of biological role, required during biogenesis of c-type cytochromes (cytochrome c6 and cytochrome f) at the step of heme attachment. The chain is Cytochrome c biogenesis protein CcsA from Nasturtium officinale (Watercress).